Here is a 161-residue protein sequence, read N- to C-terminus: Non-secretory ribonuclease (161 aa).

An N-terminal signal peptide occupies residues 1-27; it reads MVPKLFTSQICLLLLLGLLAVEGSLHV. Trp-34 carries a C-linked (Man) tryptophan glycan. His-42 (proton acceptor) is an active-site residue. Asn-44 carries an N-linked (GlcNAc...) asparagine glycan. Cystine bridges form between Cys-50-Cys-110, Cys-64-Cys-123, Cys-82-Cys-138, and Cys-89-Cys-98. Tyr-60 is subject to 3'-nitrotyrosine. 65-69 provides a ligand contact to substrate; that stretch reads KNQNT. Residues Asn-86, Asn-92, Asn-111, and Asn-119 are each glycosylated (N-linked (GlcNAc...) asparagine). Residue His-156 is the Proton donor of the active site.

This sequence belongs to the pancreatic ribonuclease family. In terms of assembly, interacts with and forms a tight 1:1 complex with RNH1. Dimerization of two such complexes may occur.

Its subcellular location is the lysosome. The protein localises to the cytoplasmic granule. The enzyme catalyses an [RNA] containing cytidine + H2O = an [RNA]-3'-cytidine-3'-phosphate + a 5'-hydroxy-ribonucleotide-3'-[RNA].. The catalysed reaction is an [RNA] containing uridine + H2O = an [RNA]-3'-uridine-3'-phosphate + a 5'-hydroxy-ribonucleotide-3'-[RNA].. In terms of biological role, this is a non-secretory ribonuclease. It is a pyrimidine specific nuclease with a slight preference for U. Cytotoxin and helminthotoxin. Possesses a wide variety of biological activities. The sequence is that of Non-secretory ribonuclease (RNASE2) from Gorilla gorilla gorilla (Western lowland gorilla).